A 448-amino-acid polypeptide reads, in one-letter code: Cysteine--tRNA ligase (448 aa).

C27 is a Zn(2+) binding site. Positions 29–39 (PTVYNYIHVGN) match the 'HIGH' region motif. Zn(2+) is bound by residues C210, H235, and E239. The 'KMSKS' region motif lies at 267–271 (KMSKS). Residue K270 participates in ATP binding.

Belongs to the class-I aminoacyl-tRNA synthetase family. Monomer. Requires Zn(2+) as cofactor.

The protein resides in the cytoplasm. The enzyme catalyses tRNA(Cys) + L-cysteine + ATP = L-cysteinyl-tRNA(Cys) + AMP + diphosphate. The protein is Cysteine--tRNA ligase of Lactococcus lactis subsp. lactis (strain IL1403) (Streptococcus lactis).